A 310-amino-acid polypeptide reads, in one-letter code: Nucleotide-binding protein BAD_0837 (310 aa).

31 to 38 provides a ligand contact to ATP; sequence GMSGAGRS. 82–85 provides a ligand contact to GTP; that stretch reads DVRS.

It belongs to the RapZ-like family.

Functionally, displays ATPase and GTPase activities. The chain is Nucleotide-binding protein BAD_0837 from Bifidobacterium adolescentis (strain ATCC 15703 / DSM 20083 / NCTC 11814 / E194a).